A 140-amino-acid chain; its full sequence is Mitochondrial import receptor subunit TOM22 homolog (140 aa).

A compositionally biased stretch (low complexity) spans 1 to 11 (MAAAAAGPGAP). The tract at residues 1–40 (MAAAAAGPGAPLSADELLPKGDAEKPEEELEEEDDEELDE) is disordered. The Cytoplasmic segment spans residues 1–81 (MAAAAAGPGA…AQKMYRFSRA (81 aa)). S13 carries the phosphoserine modification. Residues 25–40 (KPEEELEEEDDEELDE) show a composition bias toward acidic residues. Residues 39-48 (DETLSERLWG) are import sequence; necessary for mitochondrion outer membrane localization and integration in the TOM complex. T41 is subject to Phosphothreonine. Residue S43 is modified to Phosphoserine. The segment at 81 to 101 (AALWIGTTSFMILVLPVVFET) is TMD; necessary for mitochondrion outer membrane localization and integration in the TOM complex. Residues 82 to 101 (ALWIGTTSFMILVLPVVFET) traverse the membrane as a helical segment. At 102–140 (EKLQMEQQQQLQQRQILLGPNTGLSGGMPGALPSLPGKI) the chain is on the mitochondrial intermembrane side. The tract at residues 121-140 (PNTGLSGGMPGALPSLPGKI) is C-tail signal; necessary for mitochondrion outer membrane localization and integration in the TOM complex.

It belongs to the Tom22 family. Forms part of the preprotein translocase complex of the outer mitochondrial membrane (TOM complex) which consists of at least 7 different proteins (TOMM5, TOMM6, TOMM7, TOMM20, TOMM22, TOMM40 and TOMM70). Interacts with PPP2R2B and TOMM40.

It localises to the mitochondrion outer membrane. Its function is as follows. Central receptor component of the translocase of the outer membrane of mitochondria (TOM complex) responsible for the recognition and translocation of cytosolically synthesized mitochondrial preproteins. Together with the peripheral receptor TOM20 functions as the transit peptide receptor and facilitates the movement of preproteins into the translocation pore. Required for the translocation across the mitochondrial outer membrane of cytochrome P450 monooxygenases. The protein is Mitochondrial import receptor subunit TOM22 homolog (TOMM22) of Bos taurus (Bovine).